The chain runs to 135 residues: Large ribosomal subunit protein mL61 (135 aa).

Residues His-114–Asp-129 show a composition bias toward basic and acidic residues. Residues His-114 to Asn-135 are disordered.

Belongs to the mitochondrion-specific ribosomal protein mL61 family. Component of the mitochondrial large ribosomal subunit (mt-LSU). Mature yeast 74S mitochondrial ribosomes consist of a small (37S) and a large (54S) subunit. The 37S small subunit contains a 15S ribosomal RNA (15S mt-rRNA) and at least 32 different proteins. The 54S large subunit contains a 21S rRNA (21S mt-rRNA) and at least 45 different proteins.

It is found in the mitochondrion. Functionally, component of the mitochondrial ribosome (mitoribosome), a dedicated translation machinery responsible for the synthesis of mitochondrial genome-encoded proteins, including at least some of the essential transmembrane subunits of the mitochondrial respiratory chain. The mitoribosomes are attached to the mitochondrial inner membrane and translation products are cotranslationally integrated into the membrane. mL61 is not essential in cells grown at 30 degrees Celsius but is required for mitochondrial translation in cells grown at 18 degrees Celsius. The sequence is that of Large ribosomal subunit protein mL61 (mrp49) from Schizosaccharomyces pombe (strain 972 / ATCC 24843) (Fission yeast).